A 37-amino-acid polypeptide reads, in one-letter code: Alpha-conotoxin LvIA (37 aa).

The propeptide occupies 1–20 (FRGRDAAAKASGLVGLTDRR). 2 disulfides stabilise this stretch: Cys-22/Cys-28 and Cys-23/Cys-36. The interval 24 to 26 (SHP) is ser-Xaa-Pro motif, crucial for potent interaction with nAChR. Cys-36 is subject to Cysteine amide.

This sequence belongs to the conotoxin A superfamily. Expressed by the venom duct.

It is found in the secreted. Its function is as follows. Alpha-conotoxins act on postsynaptic membranes, they bind to the nicotinic acetylcholine receptors (nAChR) and thus inhibit them. This toxin blocks alpha-3-beta-2/CHRNA3-CHRNB2 nAChR with high selectivity (IC(50)=8.67 nM (on rat) and 17.5 (on human)). Also has weaker activity on alpha-6/alpha-3-beta-2-beta-3 (CHRNA6/CHRNA3-CHRNB2-CHRNB3) (IC(50)=108 nM (on rat)), alpha-6/alpha-3-beta-4 (CHRNA6/CHRNA3-CHRNB4) (IC(50)=121 nM (on rat)), alpha-3-beta-4 (CHRNA3-CHRNB4) (IC(50)=148 nM (on rat)), and alpha-7/CHRNA7 nAChRs (IC(50)=3000 nM (on rat)). When tested on mouse with hot-plate tests, this toxin significantly increases the base pain threshold and shows analgesic effects. This chain is Alpha-conotoxin LvIA, found in Conus lividus (Livid cone).